We begin with the raw amino-acid sequence, 950 residues long: Glycine dehydrogenase (decarboxylating) (950 aa).

N6-(pyridoxal phosphate)lysine is present on Lys698.

It belongs to the GcvP family. As to quaternary structure, the glycine cleavage system is composed of four proteins: P, T, L and H. Pyridoxal 5'-phosphate serves as cofactor.

It catalyses the reaction N(6)-[(R)-lipoyl]-L-lysyl-[glycine-cleavage complex H protein] + glycine + H(+) = N(6)-[(R)-S(8)-aminomethyldihydrolipoyl]-L-lysyl-[glycine-cleavage complex H protein] + CO2. Its function is as follows. The glycine cleavage system catalyzes the degradation of glycine. The P protein binds the alpha-amino group of glycine through its pyridoxal phosphate cofactor; CO(2) is released and the remaining methylamine moiety is then transferred to the lipoamide cofactor of the H protein. This chain is Glycine dehydrogenase (decarboxylating), found in Neisseria meningitidis serogroup C (strain 053442).